The chain runs to 410 residues: Eukaryotic initiation factor 4A (410 aa).

The short motif at 37 to 65 (ESFDSMGLQENLLRGIYAYGFEKPSAIQQ) is the Q motif element. One can recognise a Helicase ATP-binding domain in the interval 68 to 238 (IVPFCKGLDV…RKFMNKPVRI (171 aa)). 81–88 (AQSGTGKT) contributes to the ATP binding site. The DEAD box motif lies at 186–189 (DEAD). The 162-residue stretch at 249–410 (GIKQFYVNID…ELPANVADLL (162 aa)) folds into the Helicase C-terminal domain.

It belongs to the DEAD box helicase family. eIF4A subfamily. In terms of assembly, eIF4F is a multi-subunit complex, the composition of which varies with external and internal environmental conditions. It is composed of at least EIF4A, EIF4E and EIF4G.

It carries out the reaction ATP + H2O = ADP + phosphate + H(+). Its function is as follows. ATP-dependent RNA helicase which is a subunit of the eIF4F complex involved in cap recognition and is required for mRNA binding to ribosome. In the current model of translation initiation, eIF4A unwinds RNA secondary structures in the 5'-UTR of mRNAs which is necessary to allow efficient binding of the small ribosomal subunit, and subsequent scanning for the initiator codon. The chain is Eukaryotic initiation factor 4A from Zea mays (Maize).